Here is a 190-residue protein sequence, read N- to C-terminus: Potassium-transporting ATPase KdpC subunit (190 aa).

A helical membrane pass occupies residues 13 to 33 (VGFLLLTLMCGVVYPGIVTIF).

This sequence belongs to the KdpC family. In terms of assembly, the system is composed of three essential subunits: KdpA, KdpB and KdpC.

It is found in the cell membrane. Its function is as follows. Part of the high-affinity ATP-driven potassium transport (or Kdp) system, which catalyzes the hydrolysis of ATP coupled with the electrogenic transport of potassium into the cytoplasm. This subunit acts as a catalytic chaperone that increases the ATP-binding affinity of the ATP-hydrolyzing subunit KdpB by the formation of a transient KdpB/KdpC/ATP ternary complex. In Listeria monocytogenes serotype 4a (strain HCC23), this protein is Potassium-transporting ATPase KdpC subunit.